Reading from the N-terminus, the 466-residue chain is MKPFMDKDFLLSTETAKTLYHDYAAQVPIIDYHCHINPEEIAKDRSFDTITQVWLGGDHYKWRQMRSNGIDEKYITGDASDIEKFEKWAETLQKAIGNPLYHWSHLELQRYFDYYGTLSAKTSEEVFKLCNEKLSQPEMSVRGLIKESNVDTICTTDDPIDSLEWHKAIAKDSTFDVKVLPAWRPDKAMNLEKPDYLDYLAKLESVSGVKIASFAGLMEALKVRLEFFNSMGCKVSDHALSYVMYKPATEEEIEAIFAKRLAGGTISEMEELQFKTAFMVSVGREYNRLGWVMQLHYGTKRDNNVFRFNQLGADTGFDCINTEGSSAELANFLNALNSSDELPKTIIYSLNPTDNAAIGTVLGCFQDSTAVGKIQQGSAWWFNDNKTGMIDQMTSLANLGLLANFVGMLTDSRSFLSYTRHEYFRRILCELIGNWVENGEYPNDIEFLGQMVQDISYYNTKRYFGF.

It belongs to the metallo-dependent hydrolases superfamily. Uronate isomerase family.

It carries out the reaction D-glucuronate = D-fructuronate. The catalysed reaction is aldehydo-D-galacturonate = keto-D-tagaturonate. Its pathway is carbohydrate metabolism; pentose and glucuronate interconversion. The protein is Uronate isomerase of Lachnoclostridium phytofermentans (strain ATCC 700394 / DSM 18823 / ISDg) (Clostridium phytofermentans).